A 189-amino-acid chain; its full sequence is MLFSRIIAASAQRKLSVYLKKGGLVAYPTESCYGLGCLPTLAKALGKLAHLKKRPQHKGMIVIGNQLEQLQPLLQMPSENIQTMLRNEWPAPKTFLLLAKSGVLPALRGKRRSKLAVRVPDHTGARRLCQALGMPLVSTSCNRAGKRACRTEREVRRQFGRDVWIVGGRIGRQKSPSQIIDGETGKRLR.

Residues 9 to 189 (ASAQRKLSVY…IDGETGKRLR (181 aa)) enclose the YrdC-like domain.

The protein belongs to the SUA5 family. TsaC subfamily.

It is found in the cytoplasm. The enzyme catalyses L-threonine + hydrogencarbonate + ATP = L-threonylcarbamoyladenylate + diphosphate + H2O. Required for the formation of a threonylcarbamoyl group on adenosine at position 37 (t(6)A37) in tRNAs that read codons beginning with adenine. Catalyzes the conversion of L-threonine, HCO(3)(-)/CO(2) and ATP to give threonylcarbamoyl-AMP (TC-AMP) as the acyladenylate intermediate, with the release of diphosphate. This Neisseria gonorrhoeae (strain ATCC 700825 / FA 1090) protein is Threonylcarbamoyl-AMP synthase.